The sequence spans 450 residues: Casein kinase 1-like protein 1 (450 aa).

A Protein kinase domain is found at 9-278 (FRLGRKIGSG…LKRIFRDLFI (270 aa)). ATP is bound by residues 15–23 (IGSGSFGEI) and Lys38. Asp128 functions as the Proton acceptor in the catalytic mechanism. The disordered stretch occupies residues 311–450 (AVGTSAALPP…LQVSDEHHPH (140 aa)). The span at 328 to 342 (YTGEEEGRPHMESSR) shows a compositional bias: basic and acidic residues. A compositionally biased stretch (polar residues) spans 349–365 (LDNSGNISNQPTSSSAR). Residues 371–382 (SSSLFAQSAGSS) are compositionally biased toward low complexity.

It belongs to the protein kinase superfamily. CK1 Ser/Thr protein kinase family. Casein kinase I subfamily. Monomer. Autophosphorylated. Expressed in flowers.

Its subcellular location is the cytoplasm. The protein localises to the cell junction. The protein resides in the plasmodesma. The enzyme catalyses L-seryl-[protein] + ATP = O-phospho-L-seryl-[protein] + ADP + H(+). It carries out the reaction L-threonyl-[protein] + ATP = O-phospho-L-threonyl-[protein] + ADP + H(+). Its function is as follows. Casein kinases are operationally defined by their preferential utilization of acidic proteins such as caseins as substrates. It can phosphorylate a large number of proteins. This chain is Casein kinase 1-like protein 1, found in Arabidopsis thaliana (Mouse-ear cress).